Consider the following 670-residue polypeptide: Solute carrier organic anion transporter family member 1A6 (670 aa).

At Met1–Lys20 the chain is on the cytoplasmic side. The helical transmembrane segment at Val21–Met40 threads the bilayer. The Extracellular portion of the chain corresponds to Ser41–Gly59. N-linked (GlcNAc...) asparagine glycosylation occurs at Asn52. A helical membrane pass occupies residues Leu60 to Gly80. Residues Thr81–Pro86 are Cytoplasmic-facing. A helical transmembrane segment spans residues Ile87 to Gly111. The Extracellular portion of the chain corresponds to Arg112–Ser155. N-linked (GlcNAc...) asparagine glycans are attached at residues Asn124 and Asn135. The chain crosses the membrane as a helical span at residues Leu156–Glu184. Residues Asp185 to Lys203 are Cytoplasmic-facing. A helical transmembrane segment spans residues Met204–Thr224. Over Gly225–Val242 the chain is Extracellular. The chain crosses the membrane as a helical span at residues Gly243 to Pro267. Residues Lys268–Asn311 lie on the Cytoplasmic side of the membrane. The chain crosses the membrane as a helical span at residues Leu312–Ala333. The Extracellular portion of the chain corresponds to Asn334–Lys353. A helical transmembrane segment spans residues Ala354–Met377. Topologically, residues Lys378–Lys381 are cytoplasmic. A helical membrane pass occupies residues Ile382–Asn405. Residues Phe406–Phe513 lie on the Extracellular side of the membrane. The Kazal-like domain maps to Asn433–Arg488. Intrachain disulfides connect Cys439–Cys469, Cys445–Cys465, and Cys454–Cys486. Asn483 and Asn492 each carry an N-linked (GlcNAc...) asparagine glycan. Residues Leu514–Leu536 form a helical membrane-spanning segment. The Cytoplasmic segment spans residues Arg537–Ser545. The chain crosses the membrane as a helical span at residues Leu546–Ile571. The Extracellular portion of the chain corresponds to Asp572–Pro605. The chain crosses the membrane as a helical span at residues Ala606 to Ile623. The Cytoplasmic portion of the chain corresponds to Arg624–Leu670. Thr632 is modified (phosphothreonine). Residues Asp633–Leu670 form a disordered region. A phosphoserine mark is found at Ser634 and Ser635. Residues Ala640 to Leu670 show a composition bias toward basic and acidic residues.

Belongs to the organo anion transporter (TC 2.A.60) family. As to expression, kidney specific.

It localises to the cell membrane. May mediate the Na(+)-independent transport of organic anions. The chain is Solute carrier organic anion transporter family member 1A6 (Slco1a6) from Mus musculus (Mouse).